The chain runs to 113 residues: Flagellar hook-basal body complex protein FliE (113 aa).

The protein belongs to the FliE family.

The protein resides in the bacterial flagellum basal body. The sequence is that of Flagellar hook-basal body complex protein FliE from Rhizobium leguminosarum bv. trifolii (strain WSM2304).